The following is a 264-amino-acid chain: Rano class II histocompatibility antigen, D-1 beta chain (264 aa).

The N-terminal stretch at M1–L26 is a signal peptide. A beta-1 region spans residues V27–R120. Over V27–K226 the chain is Extracellular. 2 cysteine pairs are disulfide-bonded: C42/C106 and C144/C200. N-linked (GlcNAc...) asparagine glycosylation is present at N46. Residues T121–W215 form a beta-2 region. The region spanning P124 to S228 is the Ig-like C1-type domain. Residues K216–K226 form a connecting peptide region. A helical transmembrane segment spans residues M227–F248. Topologically, residues R249–N264 are cytoplasmic.

This sequence belongs to the MHC class II family.

The protein localises to the membrane. Involved in the presentation of foreign antigens to the immune system. This Rattus norvegicus (Rat) protein is Rano class II histocompatibility antigen, D-1 beta chain (RT1-Db1).